A 317-amino-acid chain; its full sequence is DNA-directed RNA polymerase subunit alpha (317 aa).

Residues 1–234 form an alpha N-terminal domain (alpha-NTD) region; sequence MKQFVRPEFI…AHLEFFIDLN (234 aa). The segment at 250–317 is alpha C-terminal domain (alpha-CTD); it reads DKELDRTVEE…ASLGLAFRQS (68 aa).

The protein belongs to the RNA polymerase alpha chain family. As to quaternary structure, homodimer. The RNAP catalytic core consists of 2 alpha, 1 beta, 1 beta' and 1 omega subunit. When a sigma factor is associated with the core the holoenzyme is formed, which can initiate transcription.

The catalysed reaction is RNA(n) + a ribonucleoside 5'-triphosphate = RNA(n+1) + diphosphate. DNA-dependent RNA polymerase catalyzes the transcription of DNA into RNA using the four ribonucleoside triphosphates as substrates. In Mycoplasma mycoides subsp. mycoides SC (strain CCUG 32753 / NCTC 10114 / PG1), this protein is DNA-directed RNA polymerase subunit alpha.